Consider the following 219-residue polypeptide: Large ribosomal subunit protein uL3 (219 aa).

The tract at residues 140 to 163 is disordered; the sequence is SASHGAHRNHRKPGSIGASSTPSR.

It belongs to the universal ribosomal protein uL3 family. Part of the 50S ribosomal subunit. Forms a cluster with proteins L14 and L19.

Functionally, one of the primary rRNA binding proteins, it binds directly near the 3'-end of the 23S rRNA, where it nucleates assembly of the 50S subunit. This is Large ribosomal subunit protein uL3 from Leifsonia xyli subsp. xyli (strain CTCB07).